Reading from the N-terminus, the 489-residue chain is Mitochondrial distribution and morphology protein 10 (489 aa).

This sequence belongs to the MDM10 family. As to quaternary structure, component of the ER-mitochondria encounter structure (ERMES) or MDM complex, composed of MMM1, MDM10, MDM12 and MDM34. Associates with the mitochondrial outer membrane sorting assembly machinery SAM(core) complex.

It localises to the mitochondrion outer membrane. In terms of biological role, component of the ERMES/MDM complex, which serves as a molecular tether to connect the endoplasmic reticulum and mitochondria. Components of this complex are involved in the control of mitochondrial shape and protein biogenesis and may function in phospholipid exchange. MDM10 is involved in the late assembly steps of the general translocase of the mitochondrial outer membrane (TOM complex). Functions in the TOM40-specific route of the assembly of outer membrane beta-barrel proteins, including the association of TOM40 with the receptor TOM22 and small TOM proteins. Can associate with the SAM(core) complex as well as the MDM12-MMM1 complex, both involved in late steps of the major beta-barrel assembly pathway, that is responsible for biogenesis of all outer membrane beta-barrel proteins. May act as a switch that shuttles between both complexes and channels precursor proteins into the TOM40-specific pathway. Plays a role in mitochondrial morphology and in the inheritance of mitochondria. The polypeptide is Mitochondrial distribution and morphology protein 10 (Arthroderma otae (strain ATCC MYA-4605 / CBS 113480) (Microsporum canis)).